The sequence spans 316 residues: Tetrahydromethanopterin S-methyltransferase subunit H (316 aa).

This sequence belongs to the MtrH family. As to quaternary structure, the complex is composed of 8 subunits; MtrA, MtrB, MtrC, MtrD, MtrE, MtrF, MtrG and MtrH.

The catalysed reaction is 5-methyl-5,6,7,8-tetrahydromethanopterin + coenzyme M + 2 Na(+)(in) = 5,6,7,8-tetrahydromethanopterin + methyl-coenzyme M + 2 Na(+)(out). The protein operates within one-carbon metabolism; methanogenesis from CO(2); methyl-coenzyme M from 5,10-methylene-5,6,7,8-tetrahydromethanopterin: step 2/2. Part of a complex that catalyzes the formation of methyl-coenzyme M and tetrahydromethanopterin from coenzyme M and methyl-tetrahydromethanopterin. This is an energy-conserving, sodium-ion translocating step. MtrH catalyzes the transfer of the methyl group from methyl-tetrahydromethanopterin to the corrinoid prosthetic group of MtrA. The protein is Tetrahydromethanopterin S-methyltransferase subunit H (mtrH) of Methanosarcina mazei (strain ATCC BAA-159 / DSM 3647 / Goe1 / Go1 / JCM 11833 / OCM 88) (Methanosarcina frisia).